The chain runs to 134 residues: Large ribosomal subunit protein uL14 (134 aa).

This sequence belongs to the universal ribosomal protein uL14 family. In terms of assembly, part of the 50S ribosomal subunit. Forms a cluster with proteins L3 and L19. In the 70S ribosome, L14 and L19 interact and together make contacts with the 16S rRNA in bridges B5 and B8.

Functionally, binds to 23S rRNA. Forms part of two intersubunit bridges in the 70S ribosome. The sequence is that of Large ribosomal subunit protein uL14 from Deinococcus geothermalis (strain DSM 11300 / CIP 105573 / AG-3a).